We begin with the raw amino-acid sequence, 157 residues long: 2-C-methyl-D-erythritol 2,4-cyclodiphosphate synthase (157 aa).

Positions 8 and 10 each coordinate a divalent metal cation. 4-CDP-2-C-methyl-D-erythritol 2-phosphate is bound by residues 8–10 and 34–35; these read DVH and HS. Residue His42 coordinates a divalent metal cation. 4-CDP-2-C-methyl-D-erythritol 2-phosphate-binding positions include 56–58, 61–65, 100–106, 132–135, Phe139, and Arg142; these read DIG, FPDTD, AQAPKMA, and TTTE.

This sequence belongs to the IspF family. In terms of assembly, homotrimer. It depends on a divalent metal cation as a cofactor.

It carries out the reaction 4-CDP-2-C-methyl-D-erythritol 2-phosphate = 2-C-methyl-D-erythritol 2,4-cyclic diphosphate + CMP. The protein operates within isoprenoid biosynthesis; isopentenyl diphosphate biosynthesis via DXP pathway; isopentenyl diphosphate from 1-deoxy-D-xylulose 5-phosphate: step 4/6. Involved in the biosynthesis of isopentenyl diphosphate (IPP) and dimethylallyl diphosphate (DMAPP), two major building blocks of isoprenoid compounds. Catalyzes the conversion of 4-diphosphocytidyl-2-C-methyl-D-erythritol 2-phosphate (CDP-ME2P) to 2-C-methyl-D-erythritol 2,4-cyclodiphosphate (ME-CPP) with a corresponding release of cytidine 5-monophosphate (CMP). The polypeptide is 2-C-methyl-D-erythritol 2,4-cyclodiphosphate synthase (Pseudomonas fluorescens (strain Pf0-1)).